The following is a 218-amino-acid chain: Claudin-5 (218 aa).

Residues 1-7 lie on the Cytoplasmic side of the membrane; it reads MGSAALE. Residues 8 to 28 form a helical membrane-spanning segment; it reads ILGLVLCLVGWVGLILACGLP. Residues 29–81 lie on the Extracellular side of the membrane; that stretch reads MWQVTAFLDHNIVTAQTTWKGLWMSCVVQSTGHMQCKVYESVLALSAEVQAAR. Residues 82–102 traverse the membrane as a helical segment; it reads ALTVGAVLLALVALFVTLTGA. Topologically, residues 103–123 are cytoplasmic; it reads QCTTCVAPGPVKARVALTGGA. A helical transmembrane segment spans residues 124 to 144; sequence LYAVCGLLALVPLCWFANIVV. At 145-160 the chain is on the extracellular side; it reads REFYDPTVPVSQKYEL. Residues 161–181 traverse the membrane as a helical segment; it reads GAALYIGWAASALLMCGGGLV. Residues 182–218 lie on the Cytoplasmic side of the membrane; that stretch reads CCGAWVCTGRPEFSFPVKYSAPRRPTANGDYDKKNYV. The segment at 217 to 218 is interactions with TJP1, TJP2 and TJP3; sequence YV.

This sequence belongs to the claudin family. As to quaternary structure, interacts with MPDZ. Directly interacts with TJP1/ZO-1, TJP2/ZO-2 and TJP3/ZO-3. As to expression, widely expressed with highest levels in the lung.

The protein localises to the cell junction. It localises to the tight junction. The protein resides in the cell membrane. Functionally, plays a major role in tight junction-specific obliteration of the intercellular space, through calcium-independent cell-adhesion activity. The protein is Claudin-5 (Cldn5) of Mus musculus (Mouse).